A 554-amino-acid chain; its full sequence is Beta-eudesmol synthase (554 aa).

Residues D305, D309, and E456 each coordinate Mg(2+). Positions 305 to 309 (DDIYD) match the DDXXD motif motif.

It belongs to the terpene synthase family. The cofactor is Mg(2+). Mn(2+) is required as a cofactor. As to expression, expressed in rhizomes. Detected in stems, but not in leaves.

The protein localises to the cytoplasm. The catalysed reaction is (2E,6E)-farnesyl diphosphate + H2O = beta-eudesmol + diphosphate. It carries out the reaction (2E,6E)-farnesyl diphosphate + H2O = 10-epi-gamma-eudesmol + diphosphate. It catalyses the reaction (2E,6E)-farnesyl diphosphate + H2O = alpha-eudesmol + diphosphate. It participates in secondary metabolite biosynthesis; terpenoid biosynthesis. Its function is as follows. Involved in the biosynthesis of beta-eudesmol, a sesquiterpene with antifungal activity and responsible for resistance of plants to ant attack. Produces mainly beta-eudesmol, but also smaller amounts of 10-epi-gamma-eudesmol, alpha-eudesmol and aristolene. This Zingiber zerumbet (Shampoo ginger) protein is Beta-eudesmol synthase (ZSS2).